The primary structure comprises 325 residues: Peroxidase 45 (325 aa).

The N-terminal stretch at 1 to 25 (MEKNTSQTIFSNFFLLLLLSSCVSA) is a signal peptide. Cystine bridges form between Cys36–Cys115, Cys69–Cys74, Cys121–Cys321, and Cys200–Cys232. Residue His67 is the Proton acceptor of the active site. Asp68, Val71, Gly73, Asp75, and Ser77 together coordinate Ca(2+). A substrate-binding site is contributed by Pro163. His193 contacts heme b. Thr194 lines the Ca(2+) pocket. Ca(2+) contacts are provided by Asp245, Ser248, and Asp253.

It belongs to the peroxidase family. Classical plant (class III) peroxidase subfamily. It depends on heme b as a cofactor. Ca(2+) serves as cofactor. Slightly expressed in roots.

The protein resides in the secreted. The enzyme catalyses 2 a phenolic donor + H2O2 = 2 a phenolic radical donor + 2 H2O. Removal of H(2)O(2), oxidation of toxic reductants, biosynthesis and degradation of lignin, suberization, auxin catabolism, response to environmental stresses such as wounding, pathogen attack and oxidative stress. These functions might be dependent on each isozyme/isoform in each plant tissue. The sequence is that of Peroxidase 45 (PER45) from Arabidopsis thaliana (Mouse-ear cress).